The sequence spans 451 residues: UDP-N-acetylmuramate--L-alanine ligase (451 aa).

110-116 contacts ATP; it reads GTHGKTT.

The protein belongs to the MurCDEF family.

The protein resides in the cytoplasm. It carries out the reaction UDP-N-acetyl-alpha-D-muramate + L-alanine + ATP = UDP-N-acetyl-alpha-D-muramoyl-L-alanine + ADP + phosphate + H(+). The protein operates within cell wall biogenesis; peptidoglycan biosynthesis. In terms of biological role, cell wall formation. The sequence is that of UDP-N-acetylmuramate--L-alanine ligase from Francisella tularensis subsp. novicida (strain U112).